We begin with the raw amino-acid sequence, 256 residues long: Pyridoxine 5'-phosphate synthase (256 aa).

N12 is a 3-amino-2-oxopropyl phosphate binding site. Residue D14–H15 coordinates 1-deoxy-D-xylulose 5-phosphate. R23 serves as a coordination point for 3-amino-2-oxopropyl phosphate. H48 serves as the catalytic Proton acceptor. Positions 50 and 55 each coordinate 1-deoxy-D-xylulose 5-phosphate. E75 functions as the Proton acceptor in the catalytic mechanism. T105 provides a ligand contact to 1-deoxy-D-xylulose 5-phosphate. H199 (proton donor) is an active-site residue. 3-amino-2-oxopropyl phosphate-binding positions include G200 and G221–Y222.

Belongs to the PNP synthase family. Homooctamer; tetramer of dimers.

It is found in the cytoplasm. It catalyses the reaction 3-amino-2-oxopropyl phosphate + 1-deoxy-D-xylulose 5-phosphate = pyridoxine 5'-phosphate + phosphate + 2 H2O + H(+). It functions in the pathway cofactor biosynthesis; pyridoxine 5'-phosphate biosynthesis; pyridoxine 5'-phosphate from D-erythrose 4-phosphate: step 5/5. Its function is as follows. Catalyzes the complicated ring closure reaction between the two acyclic compounds 1-deoxy-D-xylulose-5-phosphate (DXP) and 3-amino-2-oxopropyl phosphate (1-amino-acetone-3-phosphate or AAP) to form pyridoxine 5'-phosphate (PNP) and inorganic phosphate. The chain is Pyridoxine 5'-phosphate synthase from Bradyrhizobium sp. (strain ORS 278).